The sequence spans 602 residues: Oligoendopeptidase F, chromosomal (602 aa).

H388 contacts Zn(2+). E389 is a catalytic residue. Zn(2+) is bound by residues H392 and H395.

It belongs to the peptidase M3B family. The cofactor is Zn(2+).

Its function is as follows. Hydrolyzes peptides containing between 7 and 17 amino acids with a rather wide specificity. The sequence is that of Oligoendopeptidase F, chromosomal (pepF2) from Lactococcus lactis subsp. cremoris (Streptococcus cremoris).